A 707-amino-acid chain; its full sequence is Coiled-coil domain-containing protein 177 (707 aa).

2 disordered regions span residues 1 to 65 (MVDP…EGGR) and 183 to 294 (PSAG…SALT). Low complexity-rich tracts occupy residues 38-49 (AASSASASASAA), 183-215 (PSAGSSSSCSSASLPASPAPRAARKASPSPSSA), and 243-258 (ALSSESGASSSSYSGE). Ser311 is modified (phosphoserine). Positions 364-605 (GQWELQRVHA…LQHATQVAEE (242 aa)) form a coiled coil. Disordered regions lie at residues 372 to 426 (HAKQ…RSEE), 454 to 581 (KLQQ…EREH), 597 to 637 (QHAT…RDED), and 652 to 707 (ERSE…LDRK). 7 stretches are compositionally biased toward basic and acidic residues: residues 377–392 (REREEREKQRALEQGR), 399–426 (VEERRGRRGREEREAARRRQRQYERSEE), 454–484 (KLQQEQNLKQREEGLQEGRERAEQIRRERAQ), 491–514 (QRQEGQLQREKRELSRAERARHEA), 543–581 (ENYEHLVEQRTRELRERARREELQGRRAKEAAERKEREH), 618–637 (RLEKERAQRANKEKVERDED), and 652–664 (ERSEQLTRERRSA). Low complexity predominate over residues 665-675 (LESARSTARAS). Positions 677–707 (HVREKVREETNTRSFDRMVREAQLHASLDRK) are enriched in basic and acidic residues.

This Homo sapiens (Human) protein is Coiled-coil domain-containing protein 177 (CCDC177).